Consider the following 341-residue polypeptide: Anthranilate phosphoribosyltransferase (341 aa).

Residues Gly-81, 84–85 (GD), Ser-89, 91–94 (NIST), 109–117 (KHGNRSASS), and Ser-121 contribute to the 5-phospho-alpha-D-ribose 1-diphosphate site. Residue Gly-81 coordinates anthranilate. Ser-93 contacts Mg(2+). Asn-112 provides a ligand contact to anthranilate. Position 167 (Arg-167) interacts with anthranilate. The Mg(2+) site is built by Asp-225 and Glu-226.

It belongs to the anthranilate phosphoribosyltransferase family. Homodimer. Requires Mg(2+) as cofactor.

It catalyses the reaction N-(5-phospho-beta-D-ribosyl)anthranilate + diphosphate = 5-phospho-alpha-D-ribose 1-diphosphate + anthranilate. It participates in amino-acid biosynthesis; L-tryptophan biosynthesis; L-tryptophan from chorismate: step 2/5. Catalyzes the transfer of the phosphoribosyl group of 5-phosphorylribose-1-pyrophosphate (PRPP) to anthranilate to yield N-(5'-phosphoribosyl)-anthranilate (PRA). This chain is Anthranilate phosphoribosyltransferase, found in Nocardioides sp. (strain ATCC BAA-499 / JS614).